Consider the following 443-residue polypeptide: C4-dicarboxylate transport protein (443 aa).

Transmembrane regions (helical) follow at residues Pro-17–Gly-37, Leu-57–Met-77, Leu-92–Val-112, Glu-139–Ala-159, Gly-161–Gly-181, Leu-201–Ile-221, Met-234–Val-254, Ile-320–Gly-340, and Ala-368–Ile-388.

Belongs to the dicarboxylate/amino acid:cation symporter (DAACS) (TC 2.A.23) family.

The protein localises to the cell inner membrane. Functionally, responsible for the transport of dicarboxylates such as succinate, fumarate, and malate from the periplasm across the membrane. In Rhizobium etli (strain ATCC 51251 / DSM 11541 / JCM 21823 / NBRC 15573 / CFN 42), this protein is C4-dicarboxylate transport protein.